A 358-amino-acid polypeptide reads, in one-letter code: B3 domain-containing protein Os12g0592300 (358 aa).

The TF-B3 1 DNA-binding region spans 25-122; that stretch reads RIRFFRLMTG…SFDVLIFDAS (98 aa). The tract at residues 148-215 is disordered; the sequence is YHLSDSEDTS…EKSDDDDEHA (68 aa). The segment covering 156–181 has biased composition (polar residues); sequence TSTPSTFLVGSPHKASTSKKLNGKTK. The span at 203–215 shows a compositional bias: acidic residues; it reads IEEEKSDDDDEHA. A DNA-binding region (TF-B3 2) is located at residues 252–350; it reads FVTVLQAPQI…TMTVHVIGKV (99 aa).

It is found in the nucleus. The polypeptide is B3 domain-containing protein Os12g0592300 (Oryza sativa subsp. japonica (Rice)).